Consider the following 691-residue polypeptide: Threonine--tRNA ligase (691 aa).

The segment at 1–22 (MSVPAQPAPGADGGDPRQPIRV) is disordered. The 73-residue stretch at 1-73 (MSVPAQPAPG…DADAEVTPIA (73 aa)) folds into the TGS domain. Residues 268–574 (DHRKLGVELD…LTEHYAGAFP (307 aa)) are catalytic. Residues Cys373, His424, and His551 each contribute to the Zn(2+) site.

This sequence belongs to the class-II aminoacyl-tRNA synthetase family. Homodimer. It depends on Zn(2+) as a cofactor.

The protein resides in the cytoplasm. It carries out the reaction tRNA(Thr) + L-threonine + ATP = L-threonyl-tRNA(Thr) + AMP + diphosphate + H(+). Functionally, catalyzes the attachment of threonine to tRNA(Thr) in a two-step reaction: L-threonine is first activated by ATP to form Thr-AMP and then transferred to the acceptor end of tRNA(Thr). Also edits incorrectly charged L-seryl-tRNA(Thr). This chain is Threonine--tRNA ligase, found in Mycobacterium marinum (strain ATCC BAA-535 / M).